The sequence spans 611 residues: MNIMDSSPLLASVMKQNAHCGELKYDFSCELYRMSTFSTFPVNVPVSERRLARAGFYYTGVQDKVKCFSCGLVLDNWQPGDNAMEKHKQVYPSCSFVQNMLSLNNLGLSTHSAFSPLVASNLSPSLRSMTLSPSFEQVGYFSGSFSSFPRDPVTTRAAEDLSHLRSKLQNPSMSTEEARLRTSHAWPLMCLWPAEVAKAGLDDLGTADKVACVNCGVKLSNWEPKDNAMSEHRRHFPNCPFVENLMRDQPSFNVSNVTMQTHEARVKTFINWPTRIPVQPEQLADAGFYYVGRNDDVKCFCCDGGLRCWESGDDPWIEHAKWFPRCEYLLRVKGGEFVSQVQARFPHLLWNSSCTTSDKPVDENMDPIIHFEPGESPSEDAIMMNTPVVKAALEMGFSRRLIKQTVQSKILATEENYKTVNDLVSELLTAEDEKREEEKERQFEEVASDDLSLIRKNRMALFQRLTSVLPILGSLLSAKVITELEHDVIKQTTQTPSQARELIDTVLVKGNAAASIFRNCLKDFDPVLYKDLFVEKSMKYVPTEDVSGLPMEEQLRRLQEERTCKVCMDKEVSIVFIPCGHLVVCKECAPSLRKCPICRGTIKGTVRTFLS.

3 BIR repeats span residues 30-97 (ELYR…CSFV), 176-242 (EEAR…CPFV), and 262-329 (HEAR…CEYL). Zn(2+) contacts are provided by cysteine 299, cysteine 302, histidine 319, and cysteine 326. A CARD domain is found at 446–536 (VASDDLSLIR…VLYKDLFVEK (91 aa)). The RING-type zinc-finger motif lies at 564–599 (CKVCMDKEVSIVFIPCGHLVVCKECAPSLRKCPICR).

Belongs to the IAP family. Cells of the T-lymphocyte lineage. Found in both cortical and medullary cells of the thymus. Expressed at relatively high levels also in spleen, bursa, intestine and lung and at very low levels in testis, brain and skeletal muscle.

Its subcellular location is the nucleus. It is found in the cytoplasm. Apoptotic suppressor. The sequence is that of Inhibitor of apoptosis protein (ITA) from Gallus gallus (Chicken).